Reading from the N-terminus, the 456-residue chain is tRNA-2-methylthio-N(6)-dimethylallyladenosine synthase (456 aa).

The MTTase N-terminal domain maps to Arg13–Arg129. [4Fe-4S] cluster is bound by residues Cys22, Cys58, Cys92, Cys168, Cys172, and Cys175. Positions Gly154 to Gln384 constitute a Radical SAM core domain. The 64-residue stretch at Leu387 to Ser450 folds into the TRAM domain.

Belongs to the methylthiotransferase family. MiaB subfamily. Monomer. The cofactor is [4Fe-4S] cluster.

The protein localises to the cytoplasm. The catalysed reaction is N(6)-dimethylallyladenosine(37) in tRNA + (sulfur carrier)-SH + AH2 + 2 S-adenosyl-L-methionine = 2-methylsulfanyl-N(6)-dimethylallyladenosine(37) in tRNA + (sulfur carrier)-H + 5'-deoxyadenosine + L-methionine + A + S-adenosyl-L-homocysteine + 2 H(+). Its function is as follows. Catalyzes the methylthiolation of N6-(dimethylallyl)adenosine (i(6)A), leading to the formation of 2-methylthio-N6-(dimethylallyl)adenosine (ms(2)i(6)A) at position 37 in tRNAs that read codons beginning with uridine. This Syntrophobacter fumaroxidans (strain DSM 10017 / MPOB) protein is tRNA-2-methylthio-N(6)-dimethylallyladenosine synthase.